The following is an 81-amino-acid chain: Ferredoxin (81 aa).

In terms of domain architecture, 4Fe-4S ferredoxin-type spans 2-30 (KYTIVDKETCIACGACGAAAPDIYDYDED). [4Fe-4S] cluster is bound by residues Cys11, Cys14, Cys17, and Cys61.

[4Fe-4S] cluster serves as cofactor.

Ferredoxins are iron-sulfur proteins that transfer electrons in a wide variety of metabolic reactions. The sequence is that of Ferredoxin from Bacillus thermoproteolyticus.